The primary structure comprises 282 residues: uncharacterized protein (282 aa).

Tyrosine 50 (proton donor) is an active-site residue. Histidine 115 lines the substrate pocket.

This sequence belongs to the aldo/keto reductase family.

This is an uncharacterized protein from Saccharomyces cerevisiae (strain ATCC 204508 / S288c) (Baker's yeast).